Consider the following 205-residue polypeptide: FAS-associated death domain protein (205 aa).

The 79-residue stretch at proline 3–aspartate 81 folds into the DED domain. Residues leucine 97–glutamine 181 form the Death domain. The disordered stretch occupies residues glutamine 181–proline 205. At serine 191 the chain carries Phosphoserine.

As to quaternary structure, can self-associate. Component of the AIM2 PANoptosome complex, a multiprotein complex that drives inflammatory cell death (PANoptosis). Component of the death-induced signaling complex (DISC) composed of cell surface receptor FAS/CD95 or TNFRSF1A, adapter protein FADD and the CASP8 protease; recruitment of CASP8 to the complex is required for processing of CASP8 into the p18 and p10 subunits. Interacts (via death domain) with FAS (via death domain). Interacts directly (via DED domain) with NOL3 (via CARD domain); inhibits death-inducing signaling complex (DISC) assembly by inhibiting the increase in FAS-FADD binding induced by FAS activation. Interacts with CFLAR, PEA15 and MBD4. When phosphorylated, part of a complex containing HIPK3 and FAS. May interact with MAVS/IPS1. Interacts with MOCV v-CFLAR protein and PIDD1. Interacts with RIPK1 and TRADD. Interacts with stimulated TNFRSF10B. Interacts with DDX24.

It localises to the cytoplasm. Its function is as follows. Apoptotic adapter molecule that recruits caspases CASP8 or CASP10 to the activated FAS/CD95 or TNFRSF1A/TNFR-1 receptors. The resulting aggregate called the death-inducing signaling complex (DISC) performs CASP8 proteolytic activation. Active CASP8 initiates the subsequent cascade of caspases mediating apoptosis. Involved in interferon-mediated antiviral immune response, playing a role in the positive regulation of interferon signaling. The polypeptide is FAS-associated death domain protein (Mus musculus (Mouse)).